Reading from the N-terminus, the 448-residue chain is RNA-binding protein 42 (448 aa).

Residues 1–29 (MAGAGPAPGLPGAGGPVVPGPGAGIPGKS) are disordered. Ala2 carries the post-translational modification N-acetylalanine. Gly residues predominate over residues 11–27 (PGAGGPVVPGPGAGIPG). Position 132 is a phosphoserine (Ser132). Asymmetric dimethylarginine is present on Arg149. The segment at 204–448 (ELGLGLGLGL…QKEKKKLGLR (245 aa)) is necessary for interaction with HNRNPK. The segment at 286–324 (LSLRPRPRPPRPEPPPGLMALEVPEPLSEDKKKGKPEKL) is disordered. Basic and acidic residues predominate over residues 313–324 (SEDKKKGKPEKL). Residues 349–427 (FRIFCGDLGN…RPIKLRKSMW (79 aa)) enclose the RRM domain.

It belongs to the RRM RBM42 family. Interacts with HNRNPK.

The protein resides in the nucleus. It localises to the cytoplasm. Binds (via the RRM domain) to the 3'-untranslated region (UTR) of CDKN1A mRNA. This is RNA-binding protein 42 (RBM42) from Bos taurus (Bovine).